A 98-amino-acid chain; its full sequence is MEQLPEDQGPQREPYNEWTLEILEELKREAVRHFPRDWLHQLGQHIYTTYGDTWAGVEAIIRILQQLLFIHYRIGCHHSRIGININQQRRRRNGANRS.

The segment at 1–42 (MEQLPEDQGPQREPYNEWTLEILEELKREAVRHFPRDWLHQL) is homooligomerization. A phosphoserine; by host mark is found at serine 79 and serine 98.

It belongs to the HIV-1 VPR protein family. In terms of assembly, homooligomer, may form homodimer. Interacts with p6-gag region of the Pr55 Gag precursor protein through a (Leu-X-X)4 motif near the C-terminus of the P6gag protein. Interacts with host UNG. May interact with host RAD23A/HHR23A. Interacts with host VPRBP/DCAF1, leading to hijack the CUL4A-RBX1-DDB1-DCAF1/VPRBP complex, mediating ubiquitination of host proteins such as TERT and ZGPAT and arrest of the cell cycle in G2 phase. Post-translationally, phosphorylated on several residues by host. These phosphorylations regulate VPR activity for the nuclear import of the HIV-1 pre-integration complex.

The protein resides in the virion. Its subcellular location is the host nucleus. The protein localises to the host extracellular space. Functionally, during virus replication, may deplete host UNG protein, and incude G2-M cell cycle arrest. Acts by targeting specific host proteins for degradation by the 26S proteasome, through association with the cellular CUL4A-DDB1 E3 ligase complex by direct interaction with host VPRPB/DCAF-1. Cell cycle arrest reportedly occurs within hours of infection and is not blocked by antiviral agents, suggesting that it is initiated by the VPR carried into the virion. Additionally, VPR induces apoptosis in a cell cycle dependent manner suggesting that these two effects are mechanistically linked. Detected in the serum and cerebrospinal fluid of AIDS patient, VPR may also induce cell death to bystander cells. In terms of biological role, during virus entry, plays a role in the transport of the viral pre-integration (PIC) complex to the host nucleus. This function is crucial for viral infection of non-dividing macrophages. May act directly at the nuclear pore complex, by binding nucleoporins phenylalanine-glycine (FG)-repeat regions. In Pan troglodytes (Chimpanzee), this protein is Protein Vpr.